The following is a 378-amino-acid chain: UDP-4-amino-4-deoxy-L-arabinose--oxoglutarate aminotransferase (378 aa).

An N6-(pyridoxal phosphate)lysine modification is found at Lys-182.

It belongs to the DegT/DnrJ/EryC1 family. ArnB subfamily. Homodimer. Pyridoxal 5'-phosphate is required as a cofactor.

It carries out the reaction UDP-4-amino-4-deoxy-beta-L-arabinose + 2-oxoglutarate = UDP-beta-L-threo-pentopyranos-4-ulose + L-glutamate. It functions in the pathway nucleotide-sugar biosynthesis; UDP-4-deoxy-4-formamido-beta-L-arabinose biosynthesis; UDP-4-deoxy-4-formamido-beta-L-arabinose from UDP-alpha-D-glucuronate: step 2/3. The protein operates within bacterial outer membrane biogenesis; lipopolysaccharide biosynthesis. In terms of biological role, catalyzes the conversion of UDP-4-keto-arabinose (UDP-Ara4O) to UDP-4-amino-4-deoxy-L-arabinose (UDP-L-Ara4N). The modified arabinose is attached to lipid A and is required for resistance to polymyxin and cationic antimicrobial peptides. This chain is UDP-4-amino-4-deoxy-L-arabinose--oxoglutarate aminotransferase, found in Aeromonas hydrophila subsp. hydrophila (strain ATCC 7966 / DSM 30187 / BCRC 13018 / CCUG 14551 / JCM 1027 / KCTC 2358 / NCIMB 9240 / NCTC 8049).